The sequence spans 1135 residues: WASH complex subunit 4 (1135 aa).

N-acetylalanine is present on A2.

It belongs to the SWIP family. As to quaternary structure, probable component of the WASH complex.

The chain is WASH complex subunit 4 from Dictyostelium discoideum (Social amoeba).